The primary structure comprises 525 residues: GMP synthase [glutamine-hydrolyzing] (525 aa).

In terms of domain architecture, Glutamine amidotransferase type-1 spans 9–207 (RILILDFGSQ…VRDICQCEAL (199 aa)). C86 functions as the Nucleophile in the catalytic mechanism. Active-site residues include H181 and E183. In terms of domain architecture, GMPS ATP-PPase spans 208–400 (WTPAKIIDDA…LGLPYDMLYR (193 aa)). 235–241 (SGGVDSS) provides a ligand contact to ATP.

As to quaternary structure, homodimer.

It catalyses the reaction XMP + L-glutamine + ATP + H2O = GMP + L-glutamate + AMP + diphosphate + 2 H(+). It participates in purine metabolism; GMP biosynthesis; GMP from XMP (L-Gln route): step 1/1. Its function is as follows. Catalyzes the synthesis of GMP from XMP. The chain is GMP synthase [glutamine-hydrolyzing] from Salmonella typhi.